The following is a 116-amino-acid chain: NADH-ubiquinone oxidoreductase chain 3 (116 aa).

The next 3 helical transmembrane spans lie at 3-23 (LITTIITITITLSAVLATISF), 56-76 (FFLIAILFLLFDLEIALLLPL), and 87-107 (LTLIWSTAVLALLTLGLIYEW).

Belongs to the complex I subunit 3 family.

The protein localises to the mitochondrion membrane. It carries out the reaction a ubiquinone + NADH + 5 H(+)(in) = a ubiquinol + NAD(+) + 4 H(+)(out). In terms of biological role, core subunit of the mitochondrial membrane respiratory chain NADH dehydrogenase (Complex I) that is believed to belong to the minimal assembly required for catalysis. Complex I functions in the transfer of electrons from NADH to the respiratory chain. The immediate electron acceptor for the enzyme is believed to be ubiquinone. This Oncorhynchus gorbuscha (Pink salmon) protein is NADH-ubiquinone oxidoreductase chain 3 (MT-ND3).